We begin with the raw amino-acid sequence, 304 residues long: N-acetylmuramic acid 6-phosphate etherase (304 aa).

Positions 62-225 constitute an SIS domain; the sequence is IVQAFQNGGR…TTASMVMIGK (164 aa). Glu-90 serves as the catalytic Proton donor. Glu-121 is a catalytic residue.

Belongs to the GCKR-like family. MurNAc-6-P etherase subfamily. As to quaternary structure, homodimer.

The enzyme catalyses N-acetyl-D-muramate 6-phosphate + H2O = N-acetyl-D-glucosamine 6-phosphate + (R)-lactate. The protein operates within amino-sugar metabolism; 1,6-anhydro-N-acetylmuramate degradation. It functions in the pathway amino-sugar metabolism; N-acetylmuramate degradation. Its pathway is cell wall biogenesis; peptidoglycan recycling. Its function is as follows. Specifically catalyzes the cleavage of the D-lactyl ether substituent of MurNAc 6-phosphate, producing GlcNAc 6-phosphate and D-lactate. Together with AnmK, is also required for the utilization of anhydro-N-acetylmuramic acid (anhMurNAc) either imported from the medium or derived from its own cell wall murein, and thus plays a role in cell wall recycling. The protein is N-acetylmuramic acid 6-phosphate etherase of Actinobacillus pleuropneumoniae serotype 5b (strain L20).